A 331-amino-acid chain; its full sequence is T-cell acute lymphocytic leukemia protein 1 (331 aa).

The segment covering 1–22 (MTERPPSEAARSDPQLEGRDAA) has biased composition (basic and acidic residues). 2 disordered regions span residues 1–27 (MTER…ASMA) and 40–86 (ETSR…EARH). Ser12 bears the Phosphoserine mark. A compositionally biased stretch (gly residues) spans 56-70 (ARGGPGGGPAGGGGA). The segment covering 72–86 (RDLKGRDAATAEARH) has biased composition (basic and acidic residues). A phosphoserine mark is found at Ser122 and Ser172. In terms of domain architecture, bHLH spans 187-239 (VRRIFTNSRERWRQQNVNGAFAELRKLIPTHPPDKKLSKNEILRLAMKYINFL). Residues 249–331 (EGTQRAKTGK…LPAADGAGPR (83 aa)) are disordered. The segment covering 263-275 (GAGGGGGGGGGGA) has biased composition (gly residues).

In terms of assembly, efficient DNA binding requires dimerization with another bHLH protein. Forms heterodimers with TCF3. Binds to the LIM domain containing protein LMO2 and to DRG1. Can assemble in a complex with LDB1 and LMO2. Component of a TAL-1 complex composed at least of CBFA2T3, LDB1, TAL1 and TCF3. Interacts with SBNO2; this interaction inhibits TAL1 occupancy of the DCSTAMP promoter, leading to the activation of the DCSTAMP promoter by the transcription factor MITF. In terms of processing, phosphorylated on serine residues. Phosphorylation of Ser-122 is strongly stimulated by hypoxia. Post-translationally, ubiquitinated; subsequent to hypoxia-dependent phosphorylation of Ser-122, ubiquitination targets the protein for rapid degradation via the ubiquitin system. This process may be characteristic for microvascular endothelial cells, since it could not be observed in large vessel endothelial cells. Leukemic stem cell.

It localises to the nucleus. In terms of biological role, implicated in the genesis of hemopoietic malignancies. It may play an important role in hemopoietic differentiation. Serves as a positive regulator of erythroid differentiation. The chain is T-cell acute lymphocytic leukemia protein 1 (TAL1) from Homo sapiens (Human).